The chain runs to 393 residues: Lysophosphatidic acid receptor 1 (393 aa).

Residues 1–50 (MAAASTSSPVVSQPQFTAMNEPQCFYNESIAFFYNRSGKYLATEWNTVSK) are Extracellular-facing. Cystine bridges form between Cys24–Cys190 and Cys188–Cys195. N-linked (GlcNAc...) asparagine glycans are attached at residues Asn27 and Asn35. Lys39 provides a ligand contact to a 1-acyl-sn-glycero-3-phosphate. A helical transmembrane segment spans residues 51–75 (LVMGLGITVCIFIMLANLLVMVAIY). Topologically, residues 76 to 83 (VNRRFHFP) are cytoplasmic. The helical transmembrane segment at 84–107 (IYYLMANLAAADFFAGLAYFYLMF) threads the bilayer. Residues 108–121 (NTGPNTRRLTVSTW) are Extracellular-facing. The helical transmembrane segment at 122–144 (LLRQGLIDTTVTASVANLLAIAI) threads the bilayer. 124–129 (RQGLID) contributes to the a 1-acyl-sn-glycero-3-phosphate binding site. Over 145–163 (ERHITVFRMQLHTRMSNRR) the chain is Cytoplasmic. The chain crosses the membrane as a helical span at residues 164–184 (VVVVIVVIWTMAIVMGAIPSV). Topologically, residues 185-204 (GWNCICDIENCSNMAPLYSD) are extracellular. A helical membrane pass occupies residues 205 to 225 (SYLVFWAIFNLVTFVVMVVLY). A 1-acyl-sn-glycero-3-phosphate is bound at residue Trp210. Over 226-255 (AHIFGYVRQRTMRMSRHSSGPRRNRDTMMS) the chain is Cytoplasmic. A helical membrane pass occupies residues 256 to 280 (LLKTVVIVLGAFIICWTPGLVLLLL). Residues 281–294 (DVCCPQCDVLAYEK) are Extracellular-facing. The cysteines at positions 284 and 287 are disulfide-linked. A helical transmembrane segment spans residues 295–315 (FFLLLAEFNSAMNPIIYSYRD). Residues 316–393 (KEMSATFRQI…PPERPGQGRV (78 aa)) lie on the Cytoplasmic side of the membrane. The residue at position 341 (Ser341) is a Phosphoserine. Thr351 is modified (phosphothreonine). Over residues 369–381 (KMRGGHHLLRDEQ) the composition is skewed to basic and acidic residues. The interval 369–393 (KMRGGHHLLRDEQPPPPERPGQGRV) is disordered.

This sequence belongs to the G-protein coupled receptor 1 family. Interacts with RALA and GRK2. Interacts with GNAQ and GNA13. Interacts with CD14; the interaction is enhanced by exposure to bacterial lipopolysaccharide (LPS). In terms of processing, N-glycosylated. Detected in brain cortex and in pituitary pars tuberalis.

The protein localises to the cell surface. It localises to the cell membrane. Its subcellular location is the endosome. Its function is as follows. Receptor for lysophosphatidic acid (LPA). Plays a role in the reorganization of the actin cytoskeleton, cell migration, differentiation and proliferation, and thereby contributes to the responses to tissue damage and infectious agents. Activates downstream signaling cascades via the G(i)/G(o), G(12)/G(13), and G(q) families of heteromeric G proteins. Signaling inhibits adenylyl cyclase activity and decreases cellular cAMP levels. Signaling triggers an increase of cytoplasmic Ca(2+) levels. Activates RALA; this leads to the activation of phospholipase C (PLC) and the formation of inositol 1,4,5-trisphosphate. Signaling mediates activation of down-stream MAP kinases. Contributes to the regulation of cell shape. Promotes Rho-dependent reorganization of the actin cytoskeleton in neuronal cells and neurite retraction. Promotes the activation of Rho and the formation of actin stress fibers. Promotes formation of lamellipodia at the leading edge of migrating cells via activation of RAC1. Through its function as LPA receptor, plays a role in chemotaxis and cell migration, including responses to injury and wounding. Plays a role in triggering inflammation in response to bacterial lipopolysaccharide (LPS) via its interaction with CD14. Promotes cell proliferation in response to LPA. Inhibits the intracellular ciliogenesis pathway in response to LPA and through AKT1 activation. Required for normal skeleton development. May play a role in osteoblast differentiation. Required for normal brain development. Required for normal proliferation, survival and maturation of newly formed neurons in the adult dentate gyrus. Plays a role in pain perception and in the initiation of neuropathic pain. This Ovis aries (Sheep) protein is Lysophosphatidic acid receptor 1 (LPAR1).